A 558-amino-acid polypeptide reads, in one-letter code: Hepatocyte nuclear factor 1-beta (558 aa).

Residues 1–31 (MVSKLTSLQQELLSALLSSGVTKEVLIQALE) are dimerization. The 32-residue stretch at 1–32 (MVSKLTSLQQELLSALLSSGVTKEVLIQALEE) folds into the HNF-p1 domain. S49, S52, S75, and S80 each carry phosphoserine. A disordered region spans residues 66-85 (TNGHAKGRLSGDEGSEDGDD). The region spanning 93-188 (KELQALNTEE…ILRQFNQTVQ (96 aa)) is the POU-specific atypical domain. Positions 231–311 (MRRNRFKWGP…NRRKEEAFRQ (81 aa)) form a DNA-binding region, homeobox; HNF1-type. The interval 323-348 (THNLNPLLTHGSPHHQPSSSPPNKMS) is disordered.

The protein belongs to the HNF1 homeobox family. Binds DNA as a dimer. Can form homodimer or heterodimer with HNF1-alpha. Interacts (via HNF-p1 domain) with PCBD1; the interaction increases its transactivation activity.

The protein localises to the nucleus. Its function is as follows. Transcription factor that binds to the inverted palindrome 5'-GTTAATNATTAAC-3'. Binds to the FPC element in the cAMP regulatory unit of the PLAU gene. Transcriptional activity is increased by coactivator PCBD1. This chain is Hepatocyte nuclear factor 1-beta (Hnf1b), found in Mus musculus (Mouse).